Consider the following 157-residue polypeptide: SsrA-binding protein (157 aa).

Positions lysine 132–glycine 157 are disordered. The span at aspartate 135–arginine 151 shows a compositional bias: basic and acidic residues.

The protein belongs to the SmpB family.

Its subcellular location is the cytoplasm. In terms of biological role, required for rescue of stalled ribosomes mediated by trans-translation. Binds to transfer-messenger RNA (tmRNA), required for stable association of tmRNA with ribosomes. tmRNA and SmpB together mimic tRNA shape, replacing the anticodon stem-loop with SmpB. tmRNA is encoded by the ssrA gene; the 2 termini fold to resemble tRNA(Ala) and it encodes a 'tag peptide', a short internal open reading frame. During trans-translation Ala-aminoacylated tmRNA acts like a tRNA, entering the A-site of stalled ribosomes, displacing the stalled mRNA. The ribosome then switches to translate the ORF on the tmRNA; the nascent peptide is terminated with the 'tag peptide' encoded by the tmRNA and targeted for degradation. The ribosome is freed to recommence translation, which seems to be the essential function of trans-translation. This is SsrA-binding protein from Rhodopseudomonas palustris (strain ATCC BAA-98 / CGA009).